The sequence spans 395 residues: Putative pyridoxal phosphate-dependent acyltransferase (395 aa).

110-111 (GF) contributes to the pyridoxal 5'-phosphate binding site. Substrate is bound at residue His-135. Pyridoxal 5'-phosphate is bound by residues Ser-185, 210 to 213 (DDAH), and 240 to 243 (TLSK). Position 243 is an N6-(pyridoxal phosphate)lysine (Lys-243). Thr-357 is a substrate binding site.

The protein belongs to the class-II pyridoxal-phosphate-dependent aminotransferase family. Homodimer. The cofactor is pyridoxal 5'-phosphate.

The polypeptide is Putative pyridoxal phosphate-dependent acyltransferase (Staphylococcus aureus (strain Mu50 / ATCC 700699)).